A 1035-amino-acid polypeptide reads, in one-letter code: Sialidase A (1035 aa).

The first 53 residues, 1 to 53 (MSYFRNRDIDIERNSMNRSVQERKCRYSIRKLSVGAVSMIVGAVVFGTSPVLA), serve as a signal peptide directing secretion. Residues 57-112 (ASEQPLANETQLSGESSTLTDTEKSQPSSETELSGNKQEQERKDKQEEKIPRDYYA) form a disordered region. Polar residues predominate over residues 61–92 (PLANETQLSGESSTLTDTEKSQPSSETELSGN). A compositionally biased stretch (basic and acidic residues) spans 94–112 (QEQERKDKQEEKIPRDYYA). Arg-347 lines the substrate pocket. Asp-372 functions as the Proton acceptor in the catalytic mechanism. BNR repeat units follow at residues 381–392 (RRSEDNGKTWGD), 539–550 (SYSDDDGKTWSA), and 607–618 (IYSDDHGKTWHA). Residue Glu-647 is part of the active site. Arg-663 lines the substrate pocket. The stretch at 672 to 683 (ATSKDGGVTWEK) is one BNR 4 repeat. The segment at 902–951 (GPLGTSGEEPAPTVEKPEYTGPLGTSGEEPAPTVEKPEYTGPLGTAGEEA) is disordered. The LPXTG sorting signal signature appears at 1003–1007 (LPETG). Thr-1006 is modified (pentaglycyl murein peptidoglycan amidated threonine). Residues 1007-1035 (GNKESDLLASLGLTAFFLGLFTLGKKREQ) constitute a propeptide, removed by sortase.

The protein belongs to the glycosyl hydrolase 33 family.

It is found in the secreted. The protein resides in the cell wall. The catalysed reaction is Hydrolysis of alpha-(2-&gt;3)-, alpha-(2-&gt;6)-, alpha-(2-&gt;8)- glycosidic linkages of terminal sialic acid residues in oligosaccharides, glycoproteins, glycolipids, colominic acid and synthetic substrates.. The polypeptide is Sialidase A (nanA) (Streptococcus pneumoniae).